Consider the following 331-residue polypeptide: 4-hydroxy-3-methylbut-2-enyl diphosphate reductase (331 aa).

Residue Cys12 participates in [4Fe-4S] cluster binding. (2E)-4-hydroxy-3-methylbut-2-enyl diphosphate-binding residues include His43 and His81. Residues His43 and His81 each contribute to the dimethylallyl diphosphate site. Positions 43 and 81 each coordinate isopentenyl diphosphate. A [4Fe-4S] cluster-binding site is contributed by Cys103. His131 is a (2E)-4-hydroxy-3-methylbut-2-enyl diphosphate binding site. A dimethylallyl diphosphate-binding site is contributed by His131. Position 131 (His131) interacts with isopentenyl diphosphate. The active-site Proton donor is Glu133. Thr170 contributes to the (2E)-4-hydroxy-3-methylbut-2-enyl diphosphate binding site. Cys198 contributes to the [4Fe-4S] cluster binding site. (2E)-4-hydroxy-3-methylbut-2-enyl diphosphate is bound by residues Ser226, Asn228, and Ser271. Ser226, Asn228, and Ser271 together coordinate dimethylallyl diphosphate. 3 residues coordinate isopentenyl diphosphate: Ser226, Asn228, and Ser271.

This sequence belongs to the IspH family. It depends on [4Fe-4S] cluster as a cofactor.

The catalysed reaction is isopentenyl diphosphate + 2 oxidized [2Fe-2S]-[ferredoxin] + H2O = (2E)-4-hydroxy-3-methylbut-2-enyl diphosphate + 2 reduced [2Fe-2S]-[ferredoxin] + 2 H(+). It catalyses the reaction dimethylallyl diphosphate + 2 oxidized [2Fe-2S]-[ferredoxin] + H2O = (2E)-4-hydroxy-3-methylbut-2-enyl diphosphate + 2 reduced [2Fe-2S]-[ferredoxin] + 2 H(+). It functions in the pathway isoprenoid biosynthesis; dimethylallyl diphosphate biosynthesis; dimethylallyl diphosphate from (2E)-4-hydroxy-3-methylbutenyl diphosphate: step 1/1. It participates in isoprenoid biosynthesis; isopentenyl diphosphate biosynthesis via DXP pathway; isopentenyl diphosphate from 1-deoxy-D-xylulose 5-phosphate: step 6/6. Catalyzes the conversion of 1-hydroxy-2-methyl-2-(E)-butenyl 4-diphosphate (HMBPP) into a mixture of isopentenyl diphosphate (IPP) and dimethylallyl diphosphate (DMAPP). Acts in the terminal step of the DOXP/MEP pathway for isoprenoid precursor biosynthesis. The polypeptide is 4-hydroxy-3-methylbut-2-enyl diphosphate reductase (Listeria monocytogenes serovar 1/2a (strain ATCC BAA-679 / EGD-e)).